The following is a 526-amino-acid chain: Probable 1,4-alpha-glucan branching enzyme MT3115 (526 aa).

The Nucleophile role is filled by glutamate 205. Residues arginine 251 and glycine 268 each contribute to the substrate site. Aspartate 344 (proton donor) is an active-site residue. Tryptophan 396 and aspartate 462 together coordinate substrate.

It belongs to the glycosyl hydrolase 57 family.

It catalyses the reaction Transfers a segment of a (1-&gt;4)-alpha-D-glucan chain to a primary hydroxy group in a similar glucan chain.. Its function is as follows. Catalyzes the formation of branch points in alpha-glucans by cleavage of an alpha-1,4 glycosidic bond and subsequent transfer of the cleaved-off oligosaccharide to a new alpha-1,6 position. Is probably involved in the biosynthesis of 6-O-methylglucosyl lipopolysaccharides (MGLP). The sequence is that of Probable 1,4-alpha-glucan branching enzyme MT3115 from Mycobacterium tuberculosis (strain CDC 1551 / Oshkosh).